Consider the following 492-residue polypeptide: Aerolysin-4 (492 aa).

The signal sequence occupies residues M1–A23. 2 disulfides stabilise this stretch: C42-C98 and C182-C187. Residues W68 to Y84 form an interaction with host N-linked glycan region. The part of the transmembrane beta-barrel after proteolytic activation of the toxin and insertion into the host membrane stretch occupies residues Y256–W288. Residues R346–H355 are interaction with glycans from host GPI-anchor. Residues A446–Q492 constitute a propeptide that is removed on maturation.

Belongs to the aerolysin family. As to quaternary structure, homodimer in solution; homoheptamer in the host membrane. After binding to GPI-anchored proteins in target membranes and proteolytic removal of the C-terminal propeptide, the protein assembles into a heptameric pre-pore complex. A further conformation change leads to insertion into the host membrane. Post-translationally, proteolytic cleavage and subsequent release of the propeptide trigger a major conformation change, leading to the formation of a heptameric pre-pore that then inserts into the host membrane.

Its subcellular location is the secreted. It localises to the host cell membrane. Its function is as follows. Secreted, cytolytic toxin that forms pores in host membranes after proteolytic removal of a C-terminal propeptide, leading to destruction of the membrane permeability barrier and cell death. The pores are formed by transmembrane beta-strands and are approximately 3 nm in diameter. This chain is Aerolysin-4 (ahh4), found in Aeromonas hydrophila.